Consider the following 113-residue polypeptide: Pancreatic progenitor cell differentiation and proliferation factor (113 aa).

The protein belongs to the PPDPF family.

Its function is as follows. Probable regulator of exocrine pancreas development. The protein is Pancreatic progenitor cell differentiation and proliferation factor (ppdpf) of Xenopus tropicalis (Western clawed frog).